A 220-amino-acid chain; its full sequence is N-(5'-phosphoribosyl)anthranilate isomerase (220 aa).

Belongs to the TrpF family.

It catalyses the reaction N-(5-phospho-beta-D-ribosyl)anthranilate = 1-(2-carboxyphenylamino)-1-deoxy-D-ribulose 5-phosphate. It participates in amino-acid biosynthesis; L-tryptophan biosynthesis; L-tryptophan from chorismate: step 3/5. In Gloeothece citriformis (strain PCC 7424) (Cyanothece sp. (strain PCC 7424)), this protein is N-(5'-phosphoribosyl)anthranilate isomerase.